Reading from the N-terminus, the 206-residue chain is Ras-related protein Ral-B (206 aa).

Position 21–29 (21–29) interacts with GTP; the sequence is GSGGVGKSA. The Effector region motif lies at 43-51; the sequence is YEPTKADSY. GTP is bound by residues 68–72, 128–131, and 158–160; these read DTAGQ, NKSD, and SAK. A disordered region spans residues 181-206; it reads MSENKDKNGRKSSKSKKSFKERCCLL. Residue C203 is modified to Cysteine methyl ester. C203 carries the S-geranylgeranyl cysteine lipid modification. A propeptide spans 204-206 (removed in mature form); it reads CLL.

It belongs to the small GTPase superfamily. Ras family. As to quaternary structure, interacts with EXOC2/Sec5 and EXOC8/Exo84. Interacts (via effector domain) with RALBP1. Post-translationally, prenylation is essential for membrane localization. In terms of processing, the farnesylated form confers resistance to the proapoptotic and anti-anchorage-dependent growth effects of some geranylgeranyltransferase I inhibitors.

The protein localises to the cell membrane. It is found in the midbody. It carries out the reaction GTP + H2O = GDP + phosphate + H(+). Its activity is regulated as follows. Alternates between an inactive form bound to GDP and an active form bound to GTP. Activated by a guanine nucleotide-exchange factor (GEF) and inactivated by a GTPase-activating protein (GAP). Its function is as follows. Multifunctional GTPase involved in a variety of cellular processes including gene expression, cell migration, cell proliferation, oncogenic transformation and membrane trafficking. Accomplishes its multiple functions by interacting with distinct downstream effectors. Acts as a GTP sensor for GTP-dependent exocytosis of dense core vesicles. Required both to stabilize the assembly of the exocyst complex and to localize functional exocyst complexes to the leading edge of migrating cells. Required for suppression of apoptosis. In late stages of cytokinesis, upon completion of the bridge formation between dividing cells, mediates exocyst recruitment to the midbody to drive abscission. Involved in ligand-dependent receptor mediated endocytosis of the EGF and insulin receptors. The polypeptide is Ras-related protein Ral-B (Ralb) (Mus musculus (Mouse)).